Reading from the N-terminus, the 158-residue chain is 6,7-dimethyl-8-ribityllumazine synthase (158 aa).

5-amino-6-(D-ribitylamino)uracil is bound by residues Phe-23, 61–63, and 85–87; these read SFE and AVI. 90–91 serves as a coordination point for (2S)-2-hydroxy-3-oxobutyl phosphate; that stretch reads ET. His-93 acts as the Proton donor in catalysis. Phe-118 is a binding site for 5-amino-6-(D-ribitylamino)uracil. Position 132 (Arg-132) interacts with (2S)-2-hydroxy-3-oxobutyl phosphate.

Belongs to the DMRL synthase family.

It catalyses the reaction (2S)-2-hydroxy-3-oxobutyl phosphate + 5-amino-6-(D-ribitylamino)uracil = 6,7-dimethyl-8-(1-D-ribityl)lumazine + phosphate + 2 H2O + H(+). The protein operates within cofactor biosynthesis; riboflavin biosynthesis; riboflavin from 2-hydroxy-3-oxobutyl phosphate and 5-amino-6-(D-ribitylamino)uracil: step 1/2. Its function is as follows. Catalyzes the formation of 6,7-dimethyl-8-ribityllumazine by condensation of 5-amino-6-(D-ribitylamino)uracil with 3,4-dihydroxy-2-butanone 4-phosphate. This is the penultimate step in the biosynthesis of riboflavin. This Prochlorococcus marinus (strain MIT 9515) protein is 6,7-dimethyl-8-ribityllumazine synthase.